Reading from the N-terminus, the 621-residue chain is tRNA uridine 5-carboxymethylaminomethyl modification enzyme MnmG (621 aa).

9 to 14 (GGGHAG) is a binding site for FAD. 268 to 282 (GPRYCPSIEDKINRF) contributes to the NAD(+) binding site.

Belongs to the MnmG family. As to quaternary structure, homodimer. Heterotetramer of two MnmE and two MnmG subunits. FAD serves as cofactor.

Its subcellular location is the cytoplasm. Its function is as follows. NAD-binding protein involved in the addition of a carboxymethylaminomethyl (cmnm) group at the wobble position (U34) of certain tRNAs, forming tRNA-cmnm(5)s(2)U34. In Campylobacter fetus subsp. fetus (strain 82-40), this protein is tRNA uridine 5-carboxymethylaminomethyl modification enzyme MnmG.